We begin with the raw amino-acid sequence, 911 residues long: Protein translocase subunit SecA (911 aa).

ATP contacts are provided by residues Gln-87, 105–109 (GEGKT), and Asp-512. The interval 861-880 (APGLGSEQLSEEGAEVAVAS) is disordered. Zn(2+)-binding residues include Cys-895, Cys-897, Cys-906, and His-907.

The protein belongs to the SecA family. As to quaternary structure, monomer and homodimer. Part of the essential Sec protein translocation apparatus which comprises SecA, SecYEG and auxiliary proteins SecDF-YajC and YidC. It depends on Zn(2+) as a cofactor.

It is found in the cell inner membrane. The protein resides in the cytoplasm. The enzyme catalyses ATP + H2O + cellular proteinSide 1 = ADP + phosphate + cellular proteinSide 2.. Functionally, part of the Sec protein translocase complex. Interacts with the SecYEG preprotein conducting channel. Has a central role in coupling the hydrolysis of ATP to the transfer of proteins into and across the cell membrane, serving both as a receptor for the preprotein-SecB complex and as an ATP-driven molecular motor driving the stepwise translocation of polypeptide chains across the membrane. This chain is Protein translocase subunit SecA, found in Pseudomonas putida (strain ATCC 47054 / DSM 6125 / CFBP 8728 / NCIMB 11950 / KT2440).